A 324-amino-acid polypeptide reads, in one-letter code: Uroporphyrinogen decarboxylase (324 aa).

Substrate-binding positions include 14 to 18 (RQAGR), Phe-32, Asp-63, Tyr-136, Ser-191, and His-302.

Belongs to the uroporphyrinogen decarboxylase family. As to quaternary structure, homodimer.

It is found in the cytoplasm. It catalyses the reaction uroporphyrinogen III + 4 H(+) = coproporphyrinogen III + 4 CO2. It functions in the pathway porphyrin-containing compound metabolism; protoporphyrin-IX biosynthesis; coproporphyrinogen-III from 5-aminolevulinate: step 4/4. Its function is as follows. Catalyzes the decarboxylation of four acetate groups of uroporphyrinogen-III to yield coproporphyrinogen-III. This Neorickettsia sennetsu (strain ATCC VR-367 / Miyayama) (Ehrlichia sennetsu) protein is Uroporphyrinogen decarboxylase.